An 81-amino-acid polypeptide reads, in one-letter code: Photosystem I iron-sulfur center (81 aa).

4Fe-4S ferredoxin-type domains are found at residues 2–31 (SHSV…MVPW) and 39–68 (IASS…IRVY). Positions 11, 14, 17, 21, 48, 51, 54, and 58 each coordinate [4Fe-4S] cluster.

As to quaternary structure, the cyanobacterial PSI reaction center is composed of one copy each of PsaA,B,C,D,E,F,I,J,K,L,M and X, and forms trimeric complexes. [4Fe-4S] cluster serves as cofactor.

The protein resides in the cellular thylakoid membrane. The enzyme catalyses reduced [plastocyanin] + hnu + oxidized [2Fe-2S]-[ferredoxin] = oxidized [plastocyanin] + reduced [2Fe-2S]-[ferredoxin]. Functionally, apoprotein for the two 4Fe-4S centers FA and FB of photosystem I (PSI); essential for photochemical activity. FB is the terminal electron acceptor of PSI, donating electrons to ferredoxin. The C-terminus interacts with PsaA/B/D and helps assemble the protein into the PSI complex. Required for binding of PsaD and PsaE to PSI. PSI is a plastocyanin/cytochrome c6-ferredoxin oxidoreductase, converting photonic excitation into a charge separation, which transfers an electron from the donor P700 chlorophyll pair to the spectroscopically characterized acceptors A0, A1, FX, FA and FB in turn. In terms of biological role, mutant proteins with a 3Fe-4S center are unable to reconstitute PSI activity in vivo. This is Photosystem I iron-sulfur center from Synechocystis sp. (strain ATCC 27184 / PCC 6803 / Kazusa).